The chain runs to 323 residues: MNTIQPDDWAMHDTGAAPTAEVEGAVAAPVPIEGIRGKLTNQAPLAKLVWFKSGGAADWLFEPADLDDLKTFLARLDGDLPVMALGLGSNLIIRDGGVPGVVIKLGKAFASVETHDDYTVTCGAGAHGVLVASTARDAGIAGLEFMRGIPGTIGGFVRMNAGAYGRETRDVLIDCDVVLPGGSFVTLPVADLQYTYRHSALPDGAVVVSARLQGEPGDPEIIGAEMERVAEAREQSQPVRTKTGGSTFKNPPGKKAWELVDAAGCRGLTMGGAQVSEKHTNFLINVDGATSADIEGLGEEVKRRVYAHSGVELEWEIQRVGRP.

In terms of domain architecture, FAD-binding PCMH-type spans 52–217 (KSGGAADWLF…VSARLQGEPG (166 aa)). Arginine 197 is a catalytic residue. The segment at 234-253 (EQSQPVRTKTGGSTFKNPPG) is disordered. The span at 235 to 249 (QSQPVRTKTGGSTFK) shows a compositional bias: polar residues. Serine 246 (proton donor) is an active-site residue. Glutamate 316 is a catalytic residue.

Belongs to the MurB family. Requires FAD as cofactor.

The protein localises to the cytoplasm. It carries out the reaction UDP-N-acetyl-alpha-D-muramate + NADP(+) = UDP-N-acetyl-3-O-(1-carboxyvinyl)-alpha-D-glucosamine + NADPH + H(+). It participates in cell wall biogenesis; peptidoglycan biosynthesis. Functionally, cell wall formation. The protein is UDP-N-acetylenolpyruvoylglucosamine reductase of Erythrobacter litoralis (strain HTCC2594).